The chain runs to 115 residues: Large ribosomal subunit protein uL18 (115 aa).

The protein belongs to the universal ribosomal protein uL18 family. As to quaternary structure, part of the 50S ribosomal subunit; part of the 5S rRNA/L5/L18/L25 subcomplex. Contacts the 5S and 23S rRNAs.

Functionally, this is one of the proteins that bind and probably mediate the attachment of the 5S RNA into the large ribosomal subunit, where it forms part of the central protuberance. The polypeptide is Large ribosomal subunit protein uL18 (Marinobacter nauticus (strain ATCC 700491 / DSM 11845 / VT8) (Marinobacter aquaeolei)).